A 176-amino-acid polypeptide reads, in one-letter code: MDLPGPIHDFLVVLLGSGLILGSMGVLLFNNSIYSAFSLGLVLVSISLFYILANAQFVAAAQLLIYVGAINVLIIFAVMFMKGSEYSKDFNLWTVGNGVTFLVCTSIFVSLMTTIVDTSWYGIIWTTRSNQILEQDLISNSQQIGIYLSTYFFLPFELISIILLAALIGAIAVARQ.

5 helical membrane passes run 10-30 (FLVV…LLFN), 33-53 (IYSA…YILA), 61-81 (AQLL…VMFM), 92-112 (LWTV…VSLM), and 152-172 (FFLP…GAIA).

Belongs to the complex I subunit 6 family. NDH is composed of at least 16 different subunits, 5 of which are encoded in the nucleus.

The protein localises to the plastid. Its subcellular location is the chloroplast thylakoid membrane. The catalysed reaction is a plastoquinone + NADH + (n+1) H(+)(in) = a plastoquinol + NAD(+) + n H(+)(out). It catalyses the reaction a plastoquinone + NADPH + (n+1) H(+)(in) = a plastoquinol + NADP(+) + n H(+)(out). Functionally, NDH shuttles electrons from NAD(P)H:plastoquinone, via FMN and iron-sulfur (Fe-S) centers, to quinones in the photosynthetic chain and possibly in a chloroplast respiratory chain. The immediate electron acceptor for the enzyme in this species is believed to be plastoquinone. Couples the redox reaction to proton translocation, and thus conserves the redox energy in a proton gradient. The protein is NAD(P)H-quinone oxidoreductase subunit 6, chloroplastic (ndhG) of Cucumis sativus (Cucumber).